We begin with the raw amino-acid sequence, 211 residues long: Uridine kinase (211 aa).

ATP is bound at residue 12 to 19; it reads GGSGGGKT.

Belongs to the uridine kinase family.

It is found in the cytoplasm. It catalyses the reaction uridine + ATP = UMP + ADP + H(+). The enzyme catalyses cytidine + ATP = CMP + ADP + H(+). It participates in pyrimidine metabolism; CTP biosynthesis via salvage pathway; CTP from cytidine: step 1/3. Its pathway is pyrimidine metabolism; UMP biosynthesis via salvage pathway; UMP from uridine: step 1/1. The chain is Uridine kinase from Streptococcus thermophilus (strain CNRZ 1066).